A 180-amino-acid chain; its full sequence is NAD(P)H-quinone oxidoreductase subunit I, chloroplastic (180 aa).

2 consecutive 4Fe-4S ferredoxin-type domains span residues 55–84 (GRIH…VNWR) and 95–124 (LNYS…MTEE). Positions 64, 67, 70, 74, 104, 107, 110, and 114 each coordinate [4Fe-4S] cluster.

The protein belongs to the complex I 23 kDa subunit family. NDH is composed of at least 16 different subunits, 5 of which are encoded in the nucleus. The cofactor is [4Fe-4S] cluster.

Its subcellular location is the plastid. It is found in the chloroplast thylakoid membrane. The catalysed reaction is a plastoquinone + NADH + (n+1) H(+)(in) = a plastoquinol + NAD(+) + n H(+)(out). It carries out the reaction a plastoquinone + NADPH + (n+1) H(+)(in) = a plastoquinol + NADP(+) + n H(+)(out). Functionally, NDH shuttles electrons from NAD(P)H:plastoquinone, via FMN and iron-sulfur (Fe-S) centers, to quinones in the photosynthetic chain and possibly in a chloroplast respiratory chain. The immediate electron acceptor for the enzyme in this species is believed to be plastoquinone. Couples the redox reaction to proton translocation, and thus conserves the redox energy in a proton gradient. The sequence is that of NAD(P)H-quinone oxidoreductase subunit I, chloroplastic from Platanus occidentalis (Sycamore).